The sequence spans 146 residues: Hemoglobin subunit beta (146 aa).

V1 carries the post-translational modification N-acetylvaline. The region spanning 2 to 146 (HLTAEEKSAV…VANALAHKYH (145 aa)) is the Globin domain. T12 carries the post-translational modification Phosphothreonine. S44 is modified (phosphoserine). K59 carries the post-translational modification N6-acetyllysine. H63 serves as a coordination point for heme b. An N6-acetyllysine modification is found at K82. H92 provides a ligand contact to heme b. Residue C93 is modified to S-nitrosocysteine. The residue at position 144 (K144) is an N6-acetyllysine.

The protein belongs to the globin family. Heterotetramer of two alpha chains and two beta chains. As to expression, red blood cells.

Functionally, involved in oxygen transport from the lung to the various peripheral tissues. This is Hemoglobin subunit beta (HBB) from Leptonychotes weddellii (Weddell seal).